The following is a 1107-amino-acid chain: Unconventional myosin-Ie (1107 aa).

Positions 19–692 (SGVDDMVLLS…SLFLLEEMRE (674 aa)) constitute a Myosin motor domain. 112-119 (GESGAGKT) lines the ATP pocket. The tract at residues 581-591 (PHYIRCIKPNE) is actin-binding. One can recognise an IQ domain in the interval 695-724 (YDGYARVIQKTWRKFVARKKYVQMREDASD). The 193-residue stretch at 730–922 (KERRRNSINR…NKVLQVSIGP (193 aa)) folds into the TH1 domain. The tract at residues 920–1052 (IGPGLPKNAR…KPQPKPKPQV (133 aa)) is disordered. Polar residues-rich tracts occupy residues 933-949 (RNTVSSRGYSGGTNNNY), 977-989 (SGNQRSNQKSLYT), and 998-1012 (RQQSTGSDRLSQTPE). Serine 1001 is modified (phosphoserine). Over residues 1034–1051 (RPPPAGGRPKPQPKPKPQ) the composition is skewed to pro residues. The 58-residue stretch at 1050–1107 (PQVPQCKALYAYDAQDTDELSFNANDVIDIIKEDPSGWWTGRLRGKQGLFPNNYVTKI) folds into the SH3 domain.

The protein belongs to the TRAFAC class myosin-kinesin ATPase superfamily. Myosin family. In terms of assembly, interacts with CALM and F-actin. Interacts (via SH3 domain) with SYNJ1, DNM1 and DNM2. Interacts with ARL14EP. Interacts with CARMIL1. In terms of tissue distribution, detected in brain stem, brain cortex, cerebellum, stomach, colon, heart, lung, liver, spleen and kidney. Detected in utricle, cochlea, outer hair cell bundle cuticular plate and vestibular epithelia (at protein level). Detected in cochlea and vestibular tissues. Detected in kidney, lung, spleen and intestine.

It is found in the cytoplasm. The protein localises to the cytoskeleton. The protein resides in the cytoplasmic vesicle. It localises to the clathrin-coated vesicle. Its subcellular location is the cell junction. Myosins are actin-based motor molecules with ATPase activity. Unconventional myosins serve in intracellular movements. Their highly divergent tails bind to membranous compartments, which are then moved relative to actin filaments. Binds to membranes containing anionic phospholipids via its tail domain. Involved in clathrin-mediated endocytosis and intracellular movement of clathrin-coated vesicles. Required for normal morphology of the glomerular basement membrane, normal development of foot processes by kidney podocytes and normal kidney function. In dendritic cells, may control the movement of class II-containing cytoplasmic vesicles along the actin cytoskeleton by connecting them with the actin network via ARL14EP and ARL14. This chain is Unconventional myosin-Ie (Myo1e), found in Rattus norvegicus (Rat).